The following is a 205-amino-acid chain: ATP-dependent Clp protease proteolytic subunit (205 aa).

The active-site Nucleophile is the serine 98. Residue histidine 123 is part of the active site.

The protein belongs to the peptidase S14 family. As to quaternary structure, fourteen ClpP subunits assemble into 2 heptameric rings which stack back to back to give a disk-like structure with a central cavity, resembling the structure of eukaryotic proteasomes.

The protein localises to the cytoplasm. It carries out the reaction Hydrolysis of proteins to small peptides in the presence of ATP and magnesium. alpha-casein is the usual test substrate. In the absence of ATP, only oligopeptides shorter than five residues are hydrolyzed (such as succinyl-Leu-Tyr-|-NHMec, and Leu-Tyr-Leu-|-Tyr-Trp, in which cleavage of the -Tyr-|-Leu- and -Tyr-|-Trp bonds also occurs).. Its function is as follows. Cleaves peptides in various proteins in a process that requires ATP hydrolysis. Has a chymotrypsin-like activity. Plays a major role in the degradation of misfolded proteins. The polypeptide is ATP-dependent Clp protease proteolytic subunit (Desulfosudis oleivorans (strain DSM 6200 / JCM 39069 / Hxd3) (Desulfococcus oleovorans)).